The sequence spans 194 residues: MTSINITESAQEHFAKLLAQQPEGTNIRVFVVNPGTQNAECGVSYCPPEAIEANDTELKFENLSAYVDELSLPFLEDADIDYVTDKMGSQLTLKAPNAKMRKVNDDAPLFERVEYAIQTQVNPQLAGHGGHVSLMEITEAGIAIVQFGGGCNGCSMVDVTLKEGIEKELLAQFEGELTAVKDLTEHDRGEHSYY.

Positions 151 and 154 each coordinate [4Fe-4S] cluster.

Belongs to the NfuA family. In terms of assembly, homodimer. [4Fe-4S] cluster serves as cofactor.

In terms of biological role, involved in iron-sulfur cluster biogenesis. Binds a 4Fe-4S cluster, can transfer this cluster to apoproteins, and thereby intervenes in the maturation of Fe/S proteins. Could also act as a scaffold/chaperone for damaged Fe/S proteins. The polypeptide is Fe/S biogenesis protein NfuA (Aliivibrio salmonicida (strain LFI1238) (Vibrio salmonicida (strain LFI1238))).